The following is a 550-amino-acid chain: Glucose-6-phosphate isomerase (550 aa).

E357 acts as the Proton donor in catalysis. Catalysis depends on residues H388 and K516.

This sequence belongs to the GPI family.

It is found in the cytoplasm. It catalyses the reaction alpha-D-glucose 6-phosphate = beta-D-fructose 6-phosphate. Its pathway is carbohydrate biosynthesis; gluconeogenesis. It functions in the pathway carbohydrate degradation; glycolysis; D-glyceraldehyde 3-phosphate and glycerone phosphate from D-glucose: step 2/4. Catalyzes the reversible isomerization of glucose-6-phosphate to fructose-6-phosphate. This Psychromonas ingrahamii (strain DSM 17664 / CCUG 51855 / 37) protein is Glucose-6-phosphate isomerase.